We begin with the raw amino-acid sequence, 754 residues long: Endoribonuclease Dicer-like (754 aa).

The region spanning 132-251 (QLMCDAKRLS…LPPELCLLLP (120 aa)) is the PAZ domain. RNase III domains lie at 298–418 (FAIT…TGPN) and 613–734 (AQTV…LACG). Residues E336, D404, E407, E649, D720, and E723 each contribute to the Mn(2+) site.

As to quaternary structure, homodimer. Mg(2+) is required as a cofactor. It depends on Mn(2+) as a cofactor.

In terms of biological role, involved in cleaving double-stranded RNA in the RNA interference (RNAi) pathway. It produces 21 to 23 bp dsRNAs (siRNAs) which target the selective destruction of homologous RNAs. The protein is Endoribonuclease Dicer-like of Giardia intestinalis (strain ATCC 50803 / WB clone C6) (Giardia lamblia).